Here is a 142-residue protein sequence, read N- to C-terminus: MATSIGVSFSVGDGVPEAEKNAGEPENTYILRPVFQQRFRPSVVKDCIHAVLKEELANAEYSPEEMPQLTKHLSENIKDKLKEMGFDRYKMVVQVVIGEQRGEGVFMASRCFWDADTDNYTHDVFMNDSLFCVVAAFGCFYY.

The protein belongs to the dynein light chain Tctex-type family. In terms of assembly, light chain of the cytoplasmic dynein complex 2, a multisubunit complex composed at least of eleven different proteins. The cytoplasmic dynein 2 complex consists of two catalytic heavy chains (HCs) and a number of non-catalytic subunits presented by intermediate chains (ICs), light intermediate chains (LICs) and light chains (LCs). Among them, a heavy chain (DYNC2H1), two intermediate chains (DYNC2I2 and DYNC2I1), a light intermediate chain (DYNC2LI1), and a light chain (DYNLT2B) are unique to the dynein-2 complex, but a subset of the light chains are also shared by dynein-1 and dynein-2 complexes. Interacts with DYNC2I1. The dimer DYNLT2B-DYNLT1/DYNLT3 interacts with DYNC2I1; this interaction is crucial for retrograde trafficking of ciliary proteins.

Its subcellular location is the dynein axonemal particle. Its function is as follows. Acts as one of several non-catalytic accessory components of the cytoplasmic dynein 2 complex (dynein-2 complex), a motor protein complex that drives the movement of cargos along microtubules within cilia and flagella in concert with the intraflagellar transport (IFT) system. Required for proper retrograde ciliary transport. The sequence is that of Dynein light chain Tctex-type protein 2B from Homo sapiens (Human).